A 434-amino-acid polypeptide reads, in one-letter code: Eukaryotic peptide chain release factor subunit 1-1 (434 aa).

The protein belongs to the eukaryotic release factor 1 family. As to quaternary structure, heterodimer of two subunits, one of which binds GTP.

It is found in the cytoplasm. Directs the termination of nascent peptide synthesis (translation) in response to the termination codons UAA, UAG and UGA. Modulates plant growth and development. This Brassica oleracea var. botrytis (Cauliflower) protein is Eukaryotic peptide chain release factor subunit 1-1.